A 491-amino-acid chain; its full sequence is Regulatory protein NPR5 (491 aa).

The BTB domain occupies 26–116 (SDVTFSVEGR…LYSGQVSIVP (91 aa)). Residues 122–136 (RPNCGERGCWHTHCS) form a C2HC NPR-type zinc finger. Residues Cys125, Cys130, His132, and Cys135 each coordinate Zn(2+). ANK repeat units lie at residues 254 to 283 (QKIR…LNLD), 284 to 313 (ESLA…DVNY), 318 to 347 (AGKT…DPNV), and 351 to 385 (GGIT…KLRL). Residues 400 to 491 (EEGNNSNNQN…MYHHHHQHHF (92 aa)) are disordered. Over residues 403–413 (NNSNNQNNDNN) the composition is skewed to low complexity. Residues 457-470 (DQGDDHNSQREGMS) are compositionally biased toward basic and acidic residues.

Belongs to the plant 'ANKYRIN-BTB/POZ' family. 'NOOT-BOP-COCH-like' (NBCL) subfamily. In terms of assembly, homodimer or heterodimer with BOP1. Interacts with PAN. In terms of tissue distribution, highly expressed in young floral meristem. Predominantly expressed in the boundary between floral meristem (FM) and sepal primordia.

The protein resides in the cytoplasm. It localises to the nucleus. Its pathway is protein modification; protein ubiquitination. Its function is as follows. May act as a substrate-specific adapter of an E3 ubiquitin-protein ligase complex (CUL3-RBX1-BTB) which mediates the ubiquitination and subsequent proteasomal degradation of target proteins. Acts redundantly with BOP2. BOP1/2 promote leaf and floral meristem fate and determinacy in a pathway targeting AP1 and AGL24. BOP1/2 act as transcriptional co-regulators through direct interaction with TGA factors, including PAN, a direct regulator of AP1. Controls lateral organ fate through positive regulation of adaxial-abaxial polarity genes ATHB-14/PHB, YAB1/FIL and YAB3, and through positive regulation of LOB domain-containing genes LOB, LBD6/AS2 and LBD36. Promotes and maintains a developmentally determinate state in leaf cells through the negative regulation of JAG, JGL and class I KNOX genes. Is also involved in nectary development, formation of normal abscission zones (AZs) and suppression of bract formation, probably by regulating the cell wall disorganization. The sequence is that of Regulatory protein NPR5 from Arabidopsis thaliana (Mouse-ear cress).